Here is a 403-residue protein sequence, read N- to C-terminus: Vitamin D(3) 25-hydroxylase (403 aa).

C347 contacts heme.

This sequence belongs to the cytochrome P450 family. Requires heme as cofactor.

It is found in the cytoplasm. The enzyme catalyses 5beta-cholestane-3alpha,7alpha,12alpha-triol + 6 reduced [adrenodoxin] + 3 O2 + 5 H(+) = (25R)-3alpha,7alpha,12alpha-trihydroxy-5beta-cholestan-26-oate + 6 oxidized [adrenodoxin] + 4 H2O. With respect to regulation, activated by partially methylated beta-cyclodextrin. Its function is as follows. Hydroxylates vitamin D(3) into 25-hydroxyvitamin D(3) and 1-alpha,25-dihydroxyvitamin D(3), its physiologically active forms. It first hydroxylates the C-25 position of vitamin D(3) to form 25-hydroxyvitamin D(3), then subsequently hydroxylates the C-1-alpha position to form 1-alpha,25-dihydroxyvitamin D(3). Also displays 25-hydroxylase activity on vitamin D(2) and 7-dehydrocholesterol. May play a role in the biosynthesis of steroid metabolic intermediates. The sequence is that of Vitamin D(3) 25-hydroxylase from Pseudonocardia autotrophica (Amycolata autotrophica).